Here is a 141-residue protein sequence, read N- to C-terminus: Large ribosomal subunit protein uL16 (141 aa).

The protein belongs to the universal ribosomal protein uL16 family. As to quaternary structure, part of the 50S ribosomal subunit.

Its function is as follows. Binds 23S rRNA and is also seen to make contacts with the A and possibly P site tRNAs. This Campylobacter hominis (strain ATCC BAA-381 / DSM 21671 / CCUG 45161 / LMG 19568 / NCTC 13146 / CH001A) protein is Large ribosomal subunit protein uL16.